A 165-amino-acid polypeptide reads, in one-letter code: Phosphopantetheine adenylyltransferase (165 aa).

Threonine 10 is a substrate binding site. ATP contacts are provided by residues 10 to 11 (TF) and histidine 18. The substrate site is built by lysine 42, leucine 75, and arginine 89. Residues 90-92 (GVR), glutamate 100, and 125-131 (VSFISSS) contribute to the ATP site.

This sequence belongs to the bacterial CoaD family. Homohexamer. Requires Mg(2+) as cofactor.

The protein resides in the cytoplasm. It carries out the reaction (R)-4'-phosphopantetheine + ATP + H(+) = 3'-dephospho-CoA + diphosphate. It functions in the pathway cofactor biosynthesis; coenzyme A biosynthesis; CoA from (R)-pantothenate: step 4/5. Its function is as follows. Reversibly transfers an adenylyl group from ATP to 4'-phosphopantetheine, yielding dephospho-CoA (dPCoA) and pyrophosphate. This chain is Phosphopantetheine adenylyltransferase, found in Buchnera aphidicola subsp. Acyrthosiphon pisum (strain 5A).